A 65-amino-acid chain; its full sequence is Movement protein TGBp3 (65 aa).

The Lumenal segment spans residues 1–3 (MQA). Residues 4–24 (SGLILVALFSAVVSYLALLHL) traverse the membrane as a helical segment. Over 25–65 (SSSSSSCVVVVTGESFRISGCDFTEEFIGFAKTLRVANSQP) the chain is Cytoplasmic.

This sequence belongs to the Tymovirales TGBp3 protein family.

The protein resides in the host endoplasmic reticulum membrane. In terms of biological role, plays a role in viral cell-to-cell propagation, by facilitating genome transport to neighboring plant cells through plasmosdesmata. May induce the formation of granular vesicles derived from the Endoplasmic reticulum, which align on actin filaments. The protein is Movement protein TGBp3 of Carnation latent virus (CLV).